A 502-amino-acid polypeptide reads, in one-letter code: N-sulphoglucosamine sulphohydrolase (502 aa).

Residues 1–20 (MSCPVPACCALLLVLGLCRA) form the signal peptide. Residues D31 and D32 each coordinate Ca(2+). Residue N41 is glycosylated (N-linked (GlcNAc...) asparagine). C70 is a binding site for Ca(2+). C70 serves as the catalytic Nucleophile. C70 carries the post-translational modification 3-oxoalanine (Cys). N-linked (GlcNAc...) asparagine glycosylation is found at N142 and N151. An intrachain disulfide couples C183 to C194. The N-linked (GlcNAc...) asparagine glycan is linked to N264. Ca(2+) contacts are provided by D273 and N274. N-linked (GlcNAc...) asparagine glycosylation is present at N413. The cysteines at positions 481 and 495 are disulfide-linked.

Belongs to the sulfatase family. Ca(2+) serves as cofactor. The conversion to 3-oxoalanine (also known as C-formylglycine, FGly), of a serine or cysteine residue in prokaryotes and of a cysteine residue in eukaryotes, is critical for catalytic activity.

The protein resides in the lysosome. The catalysed reaction is N-sulfo-D-glucosamine + H2O = D-glucosamine + sulfate. Its function is as follows. Catalyzes a step in lysosomal heparan sulfate degradation. This is N-sulphoglucosamine sulphohydrolase (SGSH) from Homo sapiens (Human).